Consider the following 469-residue polypeptide: Glutamate--tRNA ligase 2 (469 aa).

Residues 11–21 (PSPTGHLHLGG) carry the 'HIGH' region motif. Residues 238–242 (KLSKR) carry the 'KMSKS' region motif. Position 241 (K241) interacts with ATP.

It belongs to the class-I aminoacyl-tRNA synthetase family. Glutamate--tRNA ligase type 1 subfamily. In terms of assembly, monomer.

The protein resides in the cytoplasm. The enzyme catalyses tRNA(Glu) + L-glutamate + ATP = L-glutamyl-tRNA(Glu) + AMP + diphosphate. Catalyzes the attachment of glutamate to tRNA(Glu) in a two-step reaction: glutamate is first activated by ATP to form Glu-AMP and then transferred to the acceptor end of tRNA(Glu). This chain is Glutamate--tRNA ligase 2, found in Ehrlichia chaffeensis (strain ATCC CRL-10679 / Arkansas).